We begin with the raw amino-acid sequence, 369 residues long: 4-hydroxy-3-methylbut-2-en-1-yl diphosphate synthase (flavodoxin) (369 aa).

[4Fe-4S] cluster contacts are provided by C270, C273, C305, and E312.

Belongs to the IspG family. The cofactor is [4Fe-4S] cluster.

The enzyme catalyses (2E)-4-hydroxy-3-methylbut-2-enyl diphosphate + oxidized [flavodoxin] + H2O + 2 H(+) = 2-C-methyl-D-erythritol 2,4-cyclic diphosphate + reduced [flavodoxin]. Its pathway is isoprenoid biosynthesis; isopentenyl diphosphate biosynthesis via DXP pathway; isopentenyl diphosphate from 1-deoxy-D-xylulose 5-phosphate: step 5/6. Converts 2C-methyl-D-erythritol 2,4-cyclodiphosphate (ME-2,4cPP) into 1-hydroxy-2-methyl-2-(E)-butenyl 4-diphosphate. The protein is 4-hydroxy-3-methylbut-2-en-1-yl diphosphate synthase (flavodoxin) of Pseudomonas fluorescens (strain SBW25).